A 711-amino-acid polypeptide reads, in one-letter code: Arginine decarboxylase 2 (711 aa).

Lys-147 carries the N6-(pyridoxal phosphate)lysine modification. 331-341 provides a ligand contact to substrate; that stretch reads IDIGGGLGIDY. Residues 642–661 form a disordered region; that stretch reads MHTKGGSEGENEEEEEDDEF. A compositionally biased stretch (acidic residues) spans 650–661; sequence GENEEEEEDDEF.

It belongs to the Orn/Lys/Arg decarboxylase class-II family. SpeA subfamily. In terms of assembly, homodimer and heterodimer with ADC1. The cofactor is pyridoxal 5'-phosphate. Mg(2+) is required as a cofactor.

It localises to the plastid. The protein localises to the chloroplast. The protein resides in the cytoplasm. It is found in the cytosol. It catalyses the reaction L-arginine + H(+) = agmatine + CO2. Its pathway is amine and polyamine biosynthesis; agmatine biosynthesis; agmatine from L-arginine: step 1/1. Its function is as follows. Required for the biosynthesis of putrescine. Catalyzes the first step of polyamine (PA) biosynthesis to produce putrescine from arginine. Is a major contributor to basal arginine decarboxylase (ADC) activity and putrescine biosynthesis. Accumulation of putrescine plays a positive role in salt stress tolerance. Accumulation of putrescine plays a positive role in freezing tolerance. Production of PA is essential for normal seed development. Controls PA homeostasis which is crucial for normal plant growth and development. This is Arginine decarboxylase 2 from Arabidopsis thaliana (Mouse-ear cress).